A 397-amino-acid polypeptide reads, in one-letter code: Dual-specificity RNA methyltransferase RlmN (397 aa).

Glu130 (proton acceptor) is an active-site residue. A Radical SAM core domain is found at 138–377; the sequence is VEDRGAVCIS…ASPIRTPRGR (240 aa). Cys145 and Cys383 form a disulfide bridge. Residues Cys152, Cys156, and Cys159 each contribute to the [4Fe-4S] cluster site. S-adenosyl-L-methionine contacts are provided by residues 209–210, Ser241, 263–265, and Asn340; these read GE and SLH. The S-methylcysteine intermediate role is filled by Cys383.

Belongs to the radical SAM superfamily. RlmN family. It depends on [4Fe-4S] cluster as a cofactor.

Its subcellular location is the cytoplasm. The enzyme catalyses adenosine(2503) in 23S rRNA + 2 reduced [2Fe-2S]-[ferredoxin] + 2 S-adenosyl-L-methionine = 2-methyladenosine(2503) in 23S rRNA + 5'-deoxyadenosine + L-methionine + 2 oxidized [2Fe-2S]-[ferredoxin] + S-adenosyl-L-homocysteine. The catalysed reaction is adenosine(37) in tRNA + 2 reduced [2Fe-2S]-[ferredoxin] + 2 S-adenosyl-L-methionine = 2-methyladenosine(37) in tRNA + 5'-deoxyadenosine + L-methionine + 2 oxidized [2Fe-2S]-[ferredoxin] + S-adenosyl-L-homocysteine. In terms of biological role, specifically methylates position 2 of adenine 2503 in 23S rRNA and position 2 of adenine 37 in tRNAs. m2A2503 modification seems to play a crucial role in the proofreading step occurring at the peptidyl transferase center and thus would serve to optimize ribosomal fidelity. In Granulibacter bethesdensis (strain ATCC BAA-1260 / CGDNIH1), this protein is Dual-specificity RNA methyltransferase RlmN.